The following is a 227-amino-acid chain: Guanylate kinase (227 aa).

The Guanylate kinase-like domain occupies 21 to 199; the sequence is GNLFMVVAPS…ALAELECIVA (179 aa). 28–35 contributes to the ATP binding site; the sequence is APSGAGKS.

This sequence belongs to the guanylate kinase family.

It is found in the cytoplasm. The catalysed reaction is GMP + ATP = GDP + ADP. Its function is as follows. Essential for recycling GMP and indirectly, cGMP. This chain is Guanylate kinase, found in Burkholderia thailandensis (strain ATCC 700388 / DSM 13276 / CCUG 48851 / CIP 106301 / E264).